Consider the following 761-residue polypeptide: MKTIEPEVNLALAAEHGLNAEEYQKIQEVLGRTPTFTELGIFSVMWSEHCSYKNSIAVLKTLPREGEALLTGAGEENAGLVDIGDNLAVAFKIESHNHPSAVEPYQGAATGVGGIHRDIFTMGARPVASLNSLRFGSPKDPRVRYLVDGVVRGIGDYGNSFGVPTVGGEIYFEDCYTGNPLVNAMSVGIVEHHKTVSATAEGEGNPVLIVGSSTGRDGIHGATFASEDLSEASEDKRPSVQVGDPFAEKLLLEATLEAIATGYVAGLQDMGAAGITSSTSEMSARGIEKNGNGGITIDLDLVPAREAGMSAYEIMLSESQERMLIVAEKGHEDDIIAVYRKWDVQAVVVGTVTSDNHVKVLHHGELVADIPAESLVLGGGAPVYIREAVGKKPDTAPAALLPDAGLDLRALALELLKRPNIASKRWVYRQYDSMVQTNTVTPVGHTDAAVIRIRGTKKGLAMKTDCNSRYVYLNPLAGGRIAVAECARNIACSGARPLAITNCLNFGNPYKPEVYFQFKTSVQGMGDACRAFNTPVTGGNVSFYNESTHGGGRAAIYPTPTIGMIGLLDDIDNLVGSAFTTAGDAIILFGDPLLKLEGSEFQVMQYGTPGTDAPDIDLQHEKNLQDLLVTLAEQKLLHSAHDVSDGGLFVTLAEKAIMDESRQLGFQVDLEDCGSGPYRVQEQLFSEAQGRVVGTIAPDAARAVIEEAIRHSVPVRVIGQVVPADASLAVDGHETLRFTTEELTAAYYDALENALHLNELL.

Histidine 49 is an active-site residue. The ATP site is built by tyrosine 52 and lysine 92. A Mg(2+)-binding site is contributed by glutamate 94. Substrate contacts are provided by residues 95–98 (SHNH) and arginine 117. Histidine 96 functions as the Proton acceptor in the catalytic mechanism. Aspartate 118 lines the Mg(2+) pocket. A substrate-binding site is contributed by glutamine 241. Residue aspartate 269 coordinates Mg(2+). Substrate is bound at residue 318–320 (ESQ). The ATP site is built by asparagine 502 and glycine 539. Asparagine 540 provides a ligand contact to Mg(2+). Serine 542 is a binding site for substrate.

Belongs to the FGAMS family. In terms of assembly, monomer. Part of the FGAM synthase complex composed of 1 PurL, 1 PurQ and 2 PurS subunits.

It localises to the cytoplasm. The catalysed reaction is N(2)-formyl-N(1)-(5-phospho-beta-D-ribosyl)glycinamide + L-glutamine + ATP + H2O = 2-formamido-N(1)-(5-O-phospho-beta-D-ribosyl)acetamidine + L-glutamate + ADP + phosphate + H(+). It participates in purine metabolism; IMP biosynthesis via de novo pathway; 5-amino-1-(5-phospho-D-ribosyl)imidazole from N(2)-formyl-N(1)-(5-phospho-D-ribosyl)glycinamide: step 1/2. Functionally, part of the phosphoribosylformylglycinamidine synthase complex involved in the purines biosynthetic pathway. Catalyzes the ATP-dependent conversion of formylglycinamide ribonucleotide (FGAR) and glutamine to yield formylglycinamidine ribonucleotide (FGAM) and glutamate. The FGAM synthase complex is composed of three subunits. PurQ produces an ammonia molecule by converting glutamine to glutamate. PurL transfers the ammonia molecule to FGAR to form FGAM in an ATP-dependent manner. PurS interacts with PurQ and PurL and is thought to assist in the transfer of the ammonia molecule from PurQ to PurL. This Chlorobium luteolum (strain DSM 273 / BCRC 81028 / 2530) (Pelodictyon luteolum) protein is Phosphoribosylformylglycinamidine synthase subunit PurL.